A 385-amino-acid polypeptide reads, in one-letter code: MLWKLLLRSQSCRLCSFRKMRSPPKYRPFLACFTYTTDKQSSKENTRTVEKLYKCSVDIRKIRRLKGWVLLEDETYVEEIANILQELGADETAVASILERCPEAIVCSPTAVNTQRKLWQLVCKNEEELIKLIEQFPESFFTIKDQENQKLNVQFFQELGLKNVVISRLLTAAPNVFHNPVEKNKQMVRILQESYLDVGGSEANMKVWLLKLLSQNPFILLNSPTAIKETLEFLQEQGFTSFEILQLLSKLKGFLFQLCPRSIQNSISFSKNAFKCTDHDLKQLVLKCPALLYYSVPVLEERMQGLLREGISIAQIRETPMVLELTPQIVQYRIRKLNSSGYRIKDGHLANLNGSKKEFEANFGKIQAKKVRPLFNPVAPLNVEE.

The N-terminal 35 residues, 1 to 35, are a transit peptide targeting the mitochondrion; the sequence is MLWKLLLRSQSCRLCSFRKMRSPPKYRPFLACFTY.

The protein belongs to the mTERF family. Monomer. In terms of tissue distribution, expressed in skeletal muscle, heart, liver and pancreas.

It localises to the mitochondrion. The protein localises to the mitochondrion matrix. The protein resides in the mitochondrion nucleoid. Functionally, binds mitochondrial DNA and plays a role in the regulation of transcription of mitochondrial mRNA and rRNA species. This is Transcription termination factor 2, mitochondrial (MTERF2) from Homo sapiens (Human).